The chain runs to 46 residues: Pape peptide (46 aa).

Low complexity predominate over residues 1 to 10 (KQLLKEALAP). The tract at residues 1–46 (KQLLKEALAPEPAPKPAPEPAPEPAPEPAPEAAPEPAAAAPEAAPE) is disordered. Pro residues predominate over residues 11–33 (EPAPKPAPEPAPEPAPEPAPEAA). 4 PAPE repeats span residues 16–19 (PAPE), 20–23 (PAPE), 24–27 (PAPE), and 28–31 (PAPE). Residues 34–46 (PEPAAAAPEAAPE) are compositionally biased toward low complexity.

In terms of tissue distribution, expressed by the venom gland.

Its subcellular location is the secreted. This chain is Pape peptide, found in Tityus stigmurus (Brazilian scorpion).